The primary structure comprises 416 residues: LL-diaminopimelate aminotransferase (416 aa).

Positions 25 and 52 each coordinate substrate. Residues tyrosine 78, 115 to 116 (SK), tyrosine 140, asparagine 190, tyrosine 221, and 248 to 250 (SFS) each bind pyridoxal 5'-phosphate. Residues lysine 116, tyrosine 140, and asparagine 190 each coordinate substrate. Lysine 251 bears the N6-(pyridoxal phosphate)lysine mark. Arginine 259 is a binding site for pyridoxal 5'-phosphate.

This sequence belongs to the class-I pyridoxal-phosphate-dependent aminotransferase family. In terms of assembly, homodimer. The cofactor is pyridoxal 5'-phosphate.

It is found in the cytoplasm. It carries out the reaction (2S,6S)-2,6-diaminopimelate + 2-oxoglutarate = (S)-2,3,4,5-tetrahydrodipicolinate + L-glutamate + H2O + H(+). It functions in the pathway amino-acid biosynthesis; L-lysine biosynthesis via DAP pathway; LL-2,6-diaminopimelate from (S)-tetrahydrodipicolinate (aminotransferase route): step 1/1. Functionally, involved in the synthesis of meso-diaminopimelate (m-DAP or DL-DAP), required for both lysine and peptidoglycan biosynthesis. Catalyzes the direct conversion of tetrahydrodipicolinate to LL-diaminopimelate. In Methanococcus maripaludis (strain DSM 14266 / JCM 13030 / NBRC 101832 / S2 / LL), this protein is LL-diaminopimelate aminotransferase (dapL).